The primary structure comprises 513 residues: ABC transporter H family member 2 (513 aa).

In terms of domain architecture, ABC transporter spans 39–280 (LTMKNIHKTY…EHYQKLYKEC (242 aa)). Residue 75–82 (GTSGGGKT) participates in ATP binding. Residues 291–471 (VTSVFKNDDD…SSSYSNNNNN (181 aa)) are disordered. Over residues 324–360 (SYNNNNSNLNNNSNSNSNNNSNNNNSKNYASSSSSSS) the composition is skewed to low complexity. Over residues 361–386 (VLNGKLSQSTVNNSSIYNHNNDSPFF) the composition is skewed to polar residues. Low complexity predominate over residues 387-471 (NSNNNNNINN…SSSYSNNNNN (85 aa)).

It belongs to the ABC transporter superfamily.

The chain is ABC transporter H family member 2 (abcH2) from Dictyostelium discoideum (Social amoeba).